A 396-amino-acid chain; its full sequence is Elongation factor Tu (396 aa).

The 196-residue stretch at 10-205 (KTHANIGTIG…AVDEYIPTPE (196 aa)) folds into the tr-type G domain. The tract at residues 19–26 (GHVDHGKT) is G1. A GTP-binding site is contributed by 19 to 26 (GHVDHGKT). T26 contributes to the Mg(2+) binding site. The segment at 61 to 65 (GITIS) is G2. Residues 82–85 (DCPG) form a G3 region. Residues 82 to 86 (DCPGH) and 137 to 140 (NKCD) contribute to the GTP site. A G4 region spans residues 137-140 (NKCD). A G5 region spans residues 175 to 177 (SAL).

It belongs to the TRAFAC class translation factor GTPase superfamily. Classic translation factor GTPase family. EF-Tu/EF-1A subfamily. As to quaternary structure, monomer.

The protein localises to the cytoplasm. The catalysed reaction is GTP + H2O = GDP + phosphate + H(+). In terms of biological role, GTP hydrolase that promotes the GTP-dependent binding of aminoacyl-tRNA to the A-site of ribosomes during protein biosynthesis. In Shouchella clausii (strain KSM-K16) (Alkalihalobacillus clausii), this protein is Elongation factor Tu.